Here is a 152-residue protein sequence, read N- to C-terminus: MKKRLFVLSLILLVALDQLSKFWIVSHIALGEVKPFIPGIVSLTYLQNNGAAFSILQDQQWFFVVITVLVIGYAIYYLATHPHLNIWKQLALLLIISGGIGNFIDRLRLAYVIDMIHLDFVDFAIFNVADSYLTVGVILLLICLWKEEDYGN.

The next 3 membrane-spanning stretches (helical) occupy residues 5 to 25 (LFVL…FWIV), 61 to 81 (WFFV…LATH), and 84 to 104 (LNIW…GNFI). Catalysis depends on residues aspartate 114 and aspartate 130. The helical transmembrane segment at 125 to 145 (IFNVADSYLTVGVILLLICLW) threads the bilayer.

This sequence belongs to the peptidase A8 family.

It is found in the cell membrane. It catalyses the reaction Release of signal peptides from bacterial membrane prolipoproteins. Hydrolyzes -Xaa-Yaa-Zaa-|-(S,diacylglyceryl)Cys-, in which Xaa is hydrophobic (preferably Leu), and Yaa (Ala or Ser) and Zaa (Gly or Ala) have small, neutral side chains.. It participates in protein modification; lipoprotein biosynthesis (signal peptide cleavage). In terms of biological role, this protein specifically catalyzes the removal of signal peptides from prolipoproteins. The polypeptide is Lipoprotein signal peptidase (Streptococcus pyogenes serotype M1).